The primary structure comprises 296 residues: Isoprenyl transferase (296 aa).

Basic residues predominate over residues 1–11 (MATERNRRRKG). The segment at 1-29 (MATERNRRRKGSYPQLPPAPDDYPTFPDK) is disordered. The active site involves aspartate 76. Aspartate 76 serves as a coordination point for Mg(2+). Substrate-binding positions include 77 to 80 (GNGR), tryptophan 81, arginine 89, histidine 93, and 121 to 123 (STE). Residue asparagine 124 is the Proton acceptor of the active site. Residues tryptophan 125, arginine 127, arginine 244, and 250–252 (RAS) each bind substrate. A Mg(2+)-binding site is contributed by glutamate 263.

The protein belongs to the UPP synthase family. As to quaternary structure, homodimer. Mg(2+) serves as cofactor.

Catalyzes the condensation of isopentenyl diphosphate (IPP) with allylic pyrophosphates generating different type of terpenoids. The sequence is that of Isoprenyl transferase from Mycolicibacterium parafortuitum (Mycobacterium parafortuitum).